The following is a 437-amino-acid chain: Regulator of phospholipase D SRF1 (437 aa).

Residues Met1 to Asp24 are disordered. Residues Met1–Tyr267 lie on the Cytoplasmic side of the membrane. Residues Ser45 and Ser167 each carry the phosphoserine modification. Residues Leu268–Ile288 traverse the membrane as a helical segment. Topologically, residues Lys289–Gln308 are extracellular. An N-linked (GlcNAc...) asparagine glycan is attached at Asn297. A helical transmembrane segment spans residues Pro309–Ala329. The Cytoplasmic segment spans residues His330–Lys348. A helical membrane pass occupies residues Leu349–Asn369. The Extracellular portion of the chain corresponds to Thr370–Ala403. The N-linked (GlcNAc...) asparagine glycan is linked to Asn385. The helical transmembrane segment at Leu404 to Val424 threads the bilayer. Residues Arg425–Asn437 are Cytoplasmic-facing.

Interacts with SPO14.

It localises to the membrane. Functionally, regulator of phospholipase D (SPO14) which is required for SPO14 catalytic activity in mitotic cells. Essential to buffer the toxic effects of C16:0 platelet activating factor. This Saccharomyces cerevisiae (strain ATCC 204508 / S288c) (Baker's yeast) protein is Regulator of phospholipase D SRF1 (SRF1).